Reading from the N-terminus, the 338-residue chain is UDP-N-acetylenolpyruvoylglucosamine reductase (338 aa).

In terms of domain architecture, FAD-binding PCMH-type spans 17 to 188 (IAARTDWWID…MYVDYRLRLR (172 aa)). Arg164 is an active-site residue. Ser237 acts as the Proton donor in catalysis. Residue Glu333 is part of the active site.

It belongs to the MurB family. FAD is required as a cofactor.

The protein resides in the cytoplasm. It catalyses the reaction UDP-N-acetyl-alpha-D-muramate + NADP(+) = UDP-N-acetyl-3-O-(1-carboxyvinyl)-alpha-D-glucosamine + NADPH + H(+). The protein operates within cell wall biogenesis; peptidoglycan biosynthesis. Cell wall formation. The polypeptide is UDP-N-acetylenolpyruvoylglucosamine reductase (Porphyromonas gingivalis (strain ATCC 33277 / DSM 20709 / CIP 103683 / JCM 12257 / NCTC 11834 / 2561)).